We begin with the raw amino-acid sequence, 127 residues long: DNA-directed RNA polymerases I, II, and III subunit RPABC2 (127 aa).

Residues 1–34 (MSDNEDNFDGDDFDDVEEDEGLDDLENAEEEGQE) show a composition bias toward acidic residues. The disordered stretch occupies residues 1 to 53 (MSDNEDNFDGDDFDDVEEDEGLDDLENAEEEGQENVEILPSGERPQANQKRIT). S2 bears the N-acetylserine mark. The residue at position 2 (S2) is a Phosphoserine; by CK2.

Belongs to the archaeal Rpo6/eukaryotic RPB6 RNA polymerase subunit family. In terms of assembly, component of the RNA polymerase I (Pol I), RNA polymerase II (Pol II) and RNA polymerase III (Pol III) complexes consisting of at least 13, 12 and 17 subunits, respectively. Pol I complex consists of a ten-subunit catalytic core composed of POLR1A/RPA1, POLR1B/RPA2, POLR1C/RPAC1, POLR1D/RPAC2, POLR1H/RPA12, POLR2E/RPABC1, POLR2F/RPABC2, POLR2H/RPABC3, POLR2K/RPABC4 and POLR2L/RPABC5; a mobile stalk subunit POLR1F/RPA43 protruding from the core and additional subunits homologous to general transcription factors POLR1E/RPA49 and POLR1G/RPA34. Part of Pol I pre-initiation complex (PIC), in which Pol I core assembles with RRN3 and promoter-bound UTBF and SL1/TIF-IB complex. Pol II complex contains a ten-subunit catalytic core composed of POLR2A/RPB1, POLR2B/RPB2, POLR2C/RPB3, POLR2I/RPB9, POLR2J/RPB11, POLR2E/RPABC1, POLR2F/RPABC2, POLR2H/RPABC3, POLR2K/RPABC4 and POLR2L/RPABC5 and a mobile stalk composed of two subunits POLR2D/RPB4 and POLR2G/RPB7. Part of Pol II(G) complex, in which Pol II core associates with an additional subunit POLR2M; unlike conventional Pol II, Pol II(G) functions as a transcriptional repressor. Part of TBP-based Pol II pre-initiation complex (PIC), in which Pol II core assembles with general transcription factors and other specific initiation factors including GTF2E1, GTF2E2, GTF2F1, GTF2F2, TCEA1, ERCC2, ERCC3, GTF2H2, GTF2H3, GTF2H4, GTF2H5, GTF2A1, GTF2A2, GTF2B and TBP; this large multi-subunit PIC complex mediates DNA unwinding and targets Pol II core to the transcription start site where the first phosphodiester bond forms. Pol III complex consists of a ten-subunit catalytic core composed of POLR3A/RPC1, POLR3B/RPC2, POLR1C/RPAC1, POLR1D/RPAC2, POLR3K/RPC10, POLR2E/RPABC1, POLR2F/RPABC2, POLR2H/RPABC3, POLR2K/RPABC4 and POLR2L/RPABC5; a mobile stalk composed of two subunits POLR3H/RPC8 and CRCP/RPC9, protruding from the core and functioning primarily in transcription initiation; and additional subunits homologous to general transcription factors of the RNA polymerase II machinery, POLR3C/RPC3-POLR3F/RPC6-POLR3G/RPC7 heterotrimer required for transcription initiation and POLR3D/RPC4-POLR3E/RPC5 heterodimer involved in both transcription initiation and termination.

Its subcellular location is the nucleus. The protein resides in the nucleolus. Functionally, DNA-dependent RNA polymerase catalyzes the transcription of DNA into RNA using the four ribonucleoside triphosphates as substrates. Common component of RNA polymerases I, II, and III which synthesize ribosomal RNA precursors, mRNA precursors and many functional non-coding RNAs, and small RNAs, such as 5S rRNA and tRNAs, respectively. Pol II is the central component of the basal RNA polymerase II transcription machinery. Pols are composed of mobile elements that move relative to each other. In Pol II, POLR2F/RPABC2 is part of the clamp element and together with parts of POLR2A/RPB1 and POLR2B/RPB2 forms a pocket to which the POLR2D/RPB4-POLR2G/RPB7 subcomplex binds. The chain is DNA-directed RNA polymerases I, II, and III subunit RPABC2 from Mus musculus (Mouse).